Here is an 86-residue protein sequence, read N- to C-terminus: Neurotoxin-like protein NTL2 (86 aa).

The N-terminal stretch at 1–21 (MKTLLLSLVVVTIVCLDLGYT) is a signal peptide. Cystine bridges form between cysteine 24/cysteine 45, cysteine 38/cysteine 63, cysteine 67/cysteine 78, and cysteine 79/cysteine 84.

It belongs to the three-finger toxin family. Short-chain subfamily. Orphan group I sub-subfamily. As to expression, expressed by the venom gland.

The protein resides in the secreted. In Naja atra (Chinese cobra), this protein is Neurotoxin-like protein NTL2.